A 68-amino-acid polypeptide reads, in one-letter code: MIKVIKKKSHSGLKKRIKISKKKKLLRGHAYKNHLAASKTTKQNRQLRGVTCVKLCDYNRIKTLIRGL.

The protein belongs to the bacterial ribosomal protein bL35 family.

In Onion yellows phytoplasma (strain OY-M), this protein is Large ribosomal subunit protein bL35.